The sequence spans 114 residues: Probable acid stress chaperone HdeA (114 aa).

The signal sequence occupies residues 1-26 (MIKALFNKNTALAAVAILALSGGAMA). The cysteines at positions 46 and 94 are disulfide-linked.

The protein belongs to the HdeA family.

It localises to the periplasm. Its function is as follows. Required for optimal acid stress protection. Exhibits a chaperone-like activity only at low pH by suppressing non-specifically the aggregation of denaturated periplasmic proteins. Contributes to acid resistance. Not required for wild-type virulence in the BALB/c mouse model. The chain is Probable acid stress chaperone HdeA from Brucella abortus (strain 2308).